We begin with the raw amino-acid sequence, 548 residues long: Chaperonin GroEL (548 aa).

ATP contacts are provided by residues 30 to 33 (TLGP), Lys51, 87 to 91 (DGTTT), Gly415, 479 to 481 (NAA), and Asp495.

It belongs to the chaperonin (HSP60) family. In terms of assembly, forms a cylinder of 14 subunits composed of two heptameric rings stacked back-to-back. Interacts with the co-chaperonin GroES.

The protein localises to the cytoplasm. It catalyses the reaction ATP + H2O + a folded polypeptide = ADP + phosphate + an unfolded polypeptide.. Together with its co-chaperonin GroES, plays an essential role in assisting protein folding. The GroEL-GroES system forms a nano-cage that allows encapsulation of the non-native substrate proteins and provides a physical environment optimized to promote and accelerate protein folding. In Ectopseudomonas mendocina (strain ymp) (Pseudomonas mendocina), this protein is Chaperonin GroEL.